Reading from the N-terminus, the 152-residue chain is Ubiquitin-conjugating enzyme E2 N (152 aa).

A UBC core domain is found at 3–149 (GLPRRIIKET…ARAWTRLYAM (147 aa)). The residue at position 82 (Lys82) is an N6-acetyllysine. Cys87 serves as the catalytic Glycyl thioester intermediate. Lys92 is covalently cross-linked (Glycyl lysine isopeptide (Lys-Gly) (interchain with G-Cter in ISG15)). Ser131 is modified (phosphoserine).

Belongs to the ubiquitin-conjugating enzyme family. As to quaternary structure, heterodimer with UBE2V2. Interacts (UBE2V2-UBE2N heterodimer) with the E3 ligase STUB1 (via the U-box domain); the complex has a specific 'Lys-63'-linked polyubiquitination activity. Interacts with RNF8 and RNF168. Interacts with RNF11. Interacts with the E3 ligases, HLTF and SHPRH; the interactions promote the 'Lys-63'-linked polyubiquitination of PCNA upon genotoxic stress and lead to DNA repair. Interacts with ARIH2 (via RING-type 2). Interacts with OTUB1; leading to inhibit E2-conjugating activity. Interacts with GPS2; leading to inhibit E2-conjugating activity. Interacts with RIGI and RNF135; involved in RIGI ubiquitination and activation. Post-translationally, conjugation to ISG15 impairs formation of the thioester bond with ubiquitin but not interaction with UBE2V2.

It catalyses the reaction S-ubiquitinyl-[E1 ubiquitin-activating enzyme]-L-cysteine + [E2 ubiquitin-conjugating enzyme]-L-cysteine = [E1 ubiquitin-activating enzyme]-L-cysteine + S-ubiquitinyl-[E2 ubiquitin-conjugating enzyme]-L-cysteine.. The protein operates within protein modification; protein ubiquitination. With respect to regulation, activity is inhibited by binding to OTUB1, which prevents 'Lys-63'-linked polyubiquitination. Activity is inhibited by GPS2, leading to prevent 'Lys-63'-linked polyubiquitination. The UBE2V1-UBE2N and UBE2V2-UBE2N heterodimers catalyze the synthesis of non-canonical 'Lys-63'-linked polyubiquitin chains. This type of polyubiquitination does not lead to protein degradation by the proteasome. Mediates transcriptional activation of target genes. Plays a role in the control of progress through the cell cycle and differentiation. Plays a role in the error-free DNA repair pathway and contributes to the survival of cells after DNA damage. Acts together with the E3 ligases, HLTF and SHPRH, in the 'Lys-63'-linked poly-ubiquitination of PCNA upon genotoxic stress, which is required for DNA repair. Appears to act together with E3 ligase RNF5 in the 'Lys-63'-linked polyubiquitination of JKAMP thereby regulating JKAMP function by decreasing its association with components of the proteasome and ERAD. Promotes TRIM5 capsid-specific restriction activity and the UBE2V1-UBE2N heterodimer acts in concert with TRIM5 to generate 'Lys-63'-linked polyubiquitin chains which activate the MAP3K7/TAK1 complex which in turn results in the induction and expression of NF-kappa-B and MAPK-responsive inflammatory genes. Together with RNF135 and UB2V1, catalyzes the viral RNA-dependent 'Lys-63'-linked polyubiquitination of RIGI to activate the downstream signaling pathway that leads to interferon beta production. UBE2V1-UBE2N together with TRAF3IP2 E3 ubiquitin ligase mediate 'Lys-63'-linked polyubiquitination of TRAF6, a component of IL17A-mediated signaling pathway. This is Ubiquitin-conjugating enzyme E2 N (Ube2n) from Rattus norvegicus (Rat).